We begin with the raw amino-acid sequence, 312 residues long: Acetylglutamate kinase (312 aa).

Substrate-binding positions include 74 to 75 (GG), R96, and N195.

The protein belongs to the acetylglutamate kinase family. ArgB subfamily.

The protein resides in the cytoplasm. The enzyme catalyses N-acetyl-L-glutamate + ATP = N-acetyl-L-glutamyl 5-phosphate + ADP. The protein operates within amino-acid biosynthesis; L-arginine biosynthesis; N(2)-acetyl-L-ornithine from L-glutamate: step 2/4. Functionally, catalyzes the ATP-dependent phosphorylation of N-acetyl-L-glutamate. This Nocardioides sp. (strain ATCC BAA-499 / JS614) protein is Acetylglutamate kinase.